Consider the following 816-residue polypeptide: uncharacterized protein (816 aa).

NADP(+) is bound at residue Asp503–Leu534. Residue Ser641 coordinates substrate. The active-site Proton acceptor is Tyr661. Transmembrane regions (helical) follow at residues Phe743–Leu763 and Val777–Asn797.

Belongs to the short-chain dehydrogenases/reductases (SDR) family.

It is found in the membrane. This is an uncharacterized protein from Caenorhabditis elegans.